Here is a 442-residue protein sequence, read N- to C-terminus: Protein translocase subunit SecY (442 aa).

The next 10 helical transmembrane spans lie at 24–44 (FLFL…PGIN), 76–96 (IFAL…LMTA), 125–145 (VLAL…GVAF), 149–169 (FGFY…MMWL), 178–198 (VGNG…PRAI), 212–232 (IFAL…VVFI), 269–289 (VIPA…GSWF), 312–332 (NILL…ALMF), 363–383 (GVLT…CLLP), and 385–405 (FLVV…LIVV).

It belongs to the SecY/SEC61-alpha family. As to quaternary structure, component of the Sec protein translocase complex. Heterotrimer consisting of SecY, SecE and SecG subunits. The heterotrimers can form oligomers, although 1 heterotrimer is thought to be able to translocate proteins. Interacts with the ribosome. Interacts with SecDF, and other proteins may be involved. Interacts with SecA.

Its subcellular location is the cell inner membrane. In terms of biological role, the central subunit of the protein translocation channel SecYEG. Consists of two halves formed by TMs 1-5 and 6-10. These two domains form a lateral gate at the front which open onto the bilayer between TMs 2 and 7, and are clamped together by SecE at the back. The channel is closed by both a pore ring composed of hydrophobic SecY resides and a short helix (helix 2A) on the extracellular side of the membrane which forms a plug. The plug probably moves laterally to allow the channel to open. The ring and the pore may move independently. This chain is Protein translocase subunit SecY, found in Pseudomonas aeruginosa (strain ATCC 15692 / DSM 22644 / CIP 104116 / JCM 14847 / LMG 12228 / 1C / PRS 101 / PAO1).